The primary structure comprises 75 residues: Exodeoxyribonuclease 7 small subunit (75 aa).

This sequence belongs to the XseB family. Heterooligomer composed of large and small subunits.

It localises to the cytoplasm. The catalysed reaction is Exonucleolytic cleavage in either 5'- to 3'- or 3'- to 5'-direction to yield nucleoside 5'-phosphates.. In terms of biological role, bidirectionally degrades single-stranded DNA into large acid-insoluble oligonucleotides, which are then degraded further into small acid-soluble oligonucleotides. The polypeptide is Exodeoxyribonuclease 7 small subunit (Chlamydia caviae (strain ATCC VR-813 / DSM 19441 / 03DC25 / GPIC) (Chlamydophila caviae)).